The chain runs to 680 residues: Fermitin family homolog 2 (680 aa).

The interval 40 to 81 is interaction with membranes containing phosphatidylinositol phosphate; sequence HIGGVMLKLVEKLDVKKDWSDHALWWEKKRTWLLKTHWTLDK. Residues 141 to 162 form a disordered region; sequence LKKPRDPTKKKKKKLDDQSEDE. 4 positions are modified to phosphoserine: S159, S181, S339, and S351. The FERM domain maps to 189-661; sequence MTPTYDAHDG…GYIFLSTRAK (473 aa). Positions 380-476 constitute a PH domain; it reads KVFKPKKLTL…WMAACRLASK (97 aa). Residue K383 participates in a 1,2-diacyl-sn-glycero-3-phospho-(1D-myo-inositol-3,4,5-trisphosphate) binding. At S666 the chain carries Phosphoserine.

The protein belongs to the kindlin family. In terms of assembly, interacts with ITGB1; the interaction is inhibited in presence of ITGB1BP1. Interacts with FBLIM1. Interacts with active, unphosphorylated CTNNB1. Identified in a complex with CTNNB1 and TCF7L2/TCF4. Interacts with ILK, ITGB1 and ITGB3. In terms of tissue distribution, detected in adult heart muscle (at protein level). Detected in heart, skeletal muscle and testis.

The protein resides in the cytoplasm. It localises to the cell cortex. The protein localises to the cytoskeleton. Its subcellular location is the stress fiber. It is found in the cell junction. The protein resides in the focal adhesion. It localises to the membrane. The protein localises to the cell projection. Its subcellular location is the lamellipodium membrane. It is found in the nucleus. The protein resides in the myofibril. It localises to the sarcomere. The protein localises to the i band. Its subcellular location is the cell surface. Functionally, scaffolding protein that enhances integrin activation mediated by TLN1 and/or TLN2, but activates integrins only weakly by itself. Binds to membranes enriched in phosphoinositides. Enhances integrin-mediated cell adhesion onto the extracellular matrix and cell spreading; this requires both its ability to interact with integrins and with phospholipid membranes. Required for the assembly of focal adhesions. Participates in the connection between extracellular matrix adhesion sites and the actin cytoskeleton and also in the orchestration of actin assembly and cell shape modulation. Recruits FBLIM1 to focal adhesions. Plays a role in the TGFB1 and integrin signaling pathways. Stabilizes active CTNNB1 and plays a role in the regulation of transcription mediated by CTNNB1 and TCF7L2/TCF4 and in Wnt signaling. This is Fermitin family homolog 2 (Fermt2) from Mus musculus (Mouse).